A 265-amino-acid chain; its full sequence is Putative 2-aminoethylphosphonate transport system permease protein PhnV (265 aa).

6 helical membrane passes run Gly-13 to Met-33, Leu-69 to Ala-89, Val-104 to Phe-124, Met-131 to Phe-151, Leu-185 to Gly-205, and Asn-233 to Met-253. An ABC transmembrane type-1 domain is found at Leu-65 to Met-253.

Belongs to the binding-protein-dependent transport system permease family.

The protein localises to the cell inner membrane. Functionally, probably part of the PhnSTUV complex (TC 3.A.1.11.5) involved in 2-aminoethylphosphonate import. Probably responsible for the translocation of the substrate across the membrane. The chain is Putative 2-aminoethylphosphonate transport system permease protein PhnV (phnV) from Salmonella paratyphi A (strain ATCC 9150 / SARB42).